A 184-amino-acid chain; its full sequence is Photosystem I assembly protein Ycf4 (184 aa).

2 helical membrane passes run 22-42 and 57-77; these read FCWA…GTSS and IIFF…LFIS.

The protein belongs to the Ycf4 family.

The protein resides in the plastid. Its subcellular location is the chloroplast thylakoid membrane. Functionally, seems to be required for the assembly of the photosystem I complex. This chain is Photosystem I assembly protein Ycf4, found in Lepidium virginicum (Virginia pepperweed).